The chain runs to 507 residues: ATP synthase subunit alpha (507 aa).

170-177 contributes to the ATP binding site; sequence GDRQTGKT.

The protein belongs to the ATPase alpha/beta chains family. F-type ATPases have 2 components, CF(1) - the catalytic core - and CF(0) - the membrane proton channel. CF(1) has five subunits: alpha(3), beta(3), gamma(1), delta(1), epsilon(1). CF(0) has three main subunits: a(1), b(2) and c(9-12). The alpha and beta chains form an alternating ring which encloses part of the gamma chain. CF(1) is attached to CF(0) by a central stalk formed by the gamma and epsilon chains, while a peripheral stalk is formed by the delta and b chains.

It is found in the cell inner membrane. It catalyses the reaction ATP + H2O + 4 H(+)(in) = ADP + phosphate + 5 H(+)(out). Functionally, produces ATP from ADP in the presence of a proton gradient across the membrane. The alpha chain is a regulatory subunit. The sequence is that of ATP synthase subunit alpha from Thermosipho melanesiensis (strain DSM 12029 / CIP 104789 / BI429).